A 233-amino-acid polypeptide reads, in one-letter code: Large ribosomal subunit protein uL1 (233 aa).

The protein belongs to the universal ribosomal protein uL1 family. As to quaternary structure, part of the 50S ribosomal subunit.

Its function is as follows. Binds directly to 23S rRNA. The L1 stalk is quite mobile in the ribosome, and is involved in E site tRNA release. In terms of biological role, protein L1 is also a translational repressor protein, it controls the translation of the L11 operon by binding to its mRNA. The polypeptide is Large ribosomal subunit protein uL1 (Shewanella sediminis (strain HAW-EB3)).